Here is a 210-residue protein sequence, read N- to C-terminus: MDDEEETYRLWKIRKTIMQLCHDRGYLVTQDELDQTLEEFRAQFGDKPSEGRPRRTDLTVLVAHNDDPTDQMFVFFPEEPKVGIKTIKVYCQRMQEENITRALIVVQQGMTPSAKQSLVDMAPKYILEQFLQQELLINITEHELVPEHVVMTKEEVTELLARYKLRENQLPRIQAGDPVARYFGIKRGQVVKIIRPSETAGRYITYRLVQ.

Met1 is modified (N-acetylmethionine). Lys81 participates in a covalent cross-link: Glycyl lysine isopeptide (Lys-Gly) (interchain with G-Cter in SUMO2).

It belongs to the archaeal Rpo5/eukaryotic RPB5 RNA polymerase subunit family. Component of the RNA polymerase I (Pol I), RNA polymerase II (Pol II) and RNA polymerase III (Pol III) complexes consisting of at least 13, 12 and 17 subunits, respectively. Pol I complex consists of a ten-subunit catalytic core composed of POLR1A/RPA1, POLR1B/RPA2, POLR1C/RPAC1, POLR1D/RPAC2, POLR1H/RPA12, POLR2E/RPABC1, POLR2F/RPABC2, POLR2H/RPABC3, POLR2K/RPABC4 and POLR2L/RPABC5; a mobile stalk subunit POLR1F/RPA43 protruding from the core and additional subunits homologous to general transcription factors POLR1E/RPA49 and POLR1G/RPA34. Part of Pol I pre-initiation complex (PIC), in which Pol I core assembles with RRN3 and promoter-bound UTBF and SL1/TIF-IB complex. Pol II complex contains a ten-subunit catalytic core composed of POLR2A/RPB1, POLR2B/RPB2, POLR2C/RPB3, POLR2I/RPB9, POLR2J/RPB11, POLR2E/RPABC1, POLR2F/RPABC2, POLR2H/RPABC3, POLR2K/RPABC4 and POLR2L/RPABC5 and a mobile stalk composed of two subunits POLR2D/RPB4 and POLR2G/RPB7. Part of Pol II(G) complex, in which Pol II core associates with an additional subunit POLR2M; unlike conventional Pol II, Pol II(G) functions as a transcriptional repressor. Part of TBP-based Pol II pre-initiation complex (PIC), in which Pol II core assembles with general transcription factors and other specific initiation factors including GTF2E1, GTF2E2, GTF2F1, GTF2F2, TCEA1, ERCC2, ERCC3, GTF2H2, GTF2H3, GTF2H4, GTF2H5, GTF2A1, GTF2A2, GTF2B and TBP; this large multi-subunit PIC complex mediates DNA unwinding and targets Pol II core to the transcription start site where the first phosphodiester bond forms. In Pol II complex, this subunit is present in 2-fold molar excess over the other subunits. Pol III complex consists of a ten-subunit catalytic core composed of POLR3A/RPC1, POLR3B/RPC2, POLR1C/RPAC1, POLR1D/RPAC2, POLR3K/RPC10, POLR2E/RPABC1, POLR2F/RPABC2, POLR2H/RPABC3, POLR2K/RPABC4 and POLR2L/RPABC5; a mobile stalk composed of two subunits POLR3H/RPC8 and CRCP/RPC9, protruding from the core and functioning primarily in transcription initiation; and additional subunits homologous to general transcription factors of the RNA polymerase II machinery, POLR3C/RPC3-POLR3F/RPC6-POLR3G/RPC7 heterotrimer required for transcription initiation and POLR3D/RPC4-POLR3E/RPC5 heterodimer involved in both transcription initiation and termination. Component of the PAQosome complex which is responsible for the biogenesis of several protein complexes and which consists of R2TP complex members RUVBL1, RUVBL2, RPAP3 and PIH1D1, URI complex members PFDN2, PFDN6, PDRG1, UXT and URI1 as well as ASDURF, POLR2E and DNAAF10/WDR92. Interacts with URI1.

It localises to the nucleus. It is found in the nucleolus. Functionally, DNA-dependent RNA polymerase catalyzes the transcription of DNA into RNA using the four ribonucleoside triphosphates as substrates. Common component of RNA polymerases I, II and III which synthesize ribosomal RNA precursors, mRNA precursors and many functional non-coding RNAs, and small RNAs, such as 5S rRNA and tRNAs, respectively. Pol II is the central component of the basal RNA polymerase II transcription machinery. Pols are composed of mobile elements that move relative to each other. In Pol II, POLR2E/RPABC1 is part of the lower jaw surrounding the central large cleft and thought to grab the incoming DNA template. Seems to be the major component in this process. The protein is DNA-directed RNA polymerases I, II, and III subunit RPABC1 (POLR2E) of Pongo abelii (Sumatran orangutan).